We begin with the raw amino-acid sequence, 179 residues long: Large ribosomal subunit protein uL6 (179 aa).

It belongs to the universal ribosomal protein uL6 family. In terms of assembly, part of the 50S ribosomal subunit.

In terms of biological role, this protein binds to the 23S rRNA, and is important in its secondary structure. It is located near the subunit interface in the base of the L7/L12 stalk, and near the tRNA binding site of the peptidyltransferase center. This is Large ribosomal subunit protein uL6 from Streptomyces griseus subsp. griseus (strain JCM 4626 / CBS 651.72 / NBRC 13350 / KCC S-0626 / ISP 5235).